Here is a 351-residue protein sequence, read N- to C-terminus: Protein RecA (351 aa).

An ATP-binding site is contributed by 64–71 (GPESSGKT). The segment at 330-351 (DRFLQNGGPDPDDGDGDATAEM) is disordered. Residues 339-351 (DPDDGDGDATAEM) are compositionally biased toward acidic residues.

The protein belongs to the RecA family.

Its subcellular location is the cytoplasm. Can catalyze the hydrolysis of ATP in the presence of single-stranded DNA, the ATP-dependent uptake of single-stranded DNA by duplex DNA, and the ATP-dependent hybridization of homologous single-stranded DNAs. It interacts with LexA causing its activation and leading to its autocatalytic cleavage. This is Protein RecA from Rhizobium leguminosarum bv. viciae.